Here is a 428-residue protein sequence, read N- to C-terminus: UPF0229 protein YeaH (428 aa).

Residues 78-90 are compositionally biased toward basic and acidic residues; it reads GNDHFIQNDRIER. Positions 78-111 are disordered; that stretch reads GNDHFIQNDRIERPQGGGGGGSGSGQGQASQDGE. The span at 92 to 103 shows a compositional bias: gly residues; sequence QGGGGGGSGSGQ.

Belongs to the UPF0229 family.

The sequence is that of UPF0229 protein YeaH from Salmonella heidelberg (strain SL476).